A 381-amino-acid polypeptide reads, in one-letter code: Dual-specificity RNA methyltransferase RlmN (381 aa).

The active-site Proton acceptor is E95. The region spanning 101–339 is the Radical SAM core domain; the sequence is DGRRGTLCVS…MTTVRTTRGD (239 aa). An intrachain disulfide couples C108 to C345. [4Fe-4S] cluster-binding residues include C115, C119, and C122. S-adenosyl-L-methionine is bound by residues 169 to 170, S201, 223 to 225, and N302; these read GE and SLH. C345 serves as the catalytic S-methylcysteine intermediate.

It belongs to the radical SAM superfamily. RlmN family. It depends on [4Fe-4S] cluster as a cofactor.

It is found in the cytoplasm. The catalysed reaction is adenosine(2503) in 23S rRNA + 2 reduced [2Fe-2S]-[ferredoxin] + 2 S-adenosyl-L-methionine = 2-methyladenosine(2503) in 23S rRNA + 5'-deoxyadenosine + L-methionine + 2 oxidized [2Fe-2S]-[ferredoxin] + S-adenosyl-L-homocysteine. The enzyme catalyses adenosine(37) in tRNA + 2 reduced [2Fe-2S]-[ferredoxin] + 2 S-adenosyl-L-methionine = 2-methyladenosine(37) in tRNA + 5'-deoxyadenosine + L-methionine + 2 oxidized [2Fe-2S]-[ferredoxin] + S-adenosyl-L-homocysteine. Functionally, specifically methylates position 2 of adenine 2503 in 23S rRNA and position 2 of adenine 37 in tRNAs. m2A2503 modification seems to play a crucial role in the proofreading step occurring at the peptidyl transferase center and thus would serve to optimize ribosomal fidelity. The polypeptide is Dual-specificity RNA methyltransferase RlmN (Alcanivorax borkumensis (strain ATCC 700651 / DSM 11573 / NCIMB 13689 / SK2)).